The following is a 1012-amino-acid chain: Alanine--tRNA ligase, mitochondrial (1012 aa).

Residues 1–24 (MYNSAKQLQRVLTAREIRKTFLDH) constitute a mitochondrion transit peptide. Zn(2+) contacts are provided by His-656, His-660, Cys-766, and His-770.

The protein belongs to the class-II aminoacyl-tRNA synthetase family. Monomer. Zn(2+) is required as a cofactor.

The protein localises to the mitochondrion. It catalyses the reaction tRNA(Ala) + L-alanine + ATP = L-alanyl-tRNA(Ala) + AMP + diphosphate. Its function is as follows. Catalyzes the attachment of alanine to tRNA(Ala) in a two-step reaction: alanine is first activated by ATP to form Ala-AMP and then transferred to the acceptor end of tRNA(Ala). Also edits incorrectly charged tRNA(Ala) via its editing domain. In Drosophila melanogaster (Fruit fly), this protein is Alanine--tRNA ligase, mitochondrial.